Reading from the N-terminus, the 382-residue chain is Flap endonuclease 1-A (382 aa).

Residues 1 to 104 form an N-domain region; sequence MGIHGLAKLI…GELAKRSERR (104 aa). Aspartate 34 serves as a coordination point for Mg(2+). DNA contacts are provided by arginine 47 and arginine 70. Residues aspartate 86, glutamate 158, glutamate 160, aspartate 179, and aspartate 181 each coordinate Mg(2+). An I-domain region spans residues 122–253; it reads NIEKFTKRLV…KRAIDLIRQH (132 aa). Glutamate 158 lines the DNA pocket. DNA is bound by residues glycine 231 and aspartate 233. Position 233 (aspartate 233) interacts with Mg(2+). Positions 336 to 344 are interaction with PCNA; it reads TQGRLDDFF. The interval 350–382 is disordered; that stretch reads VSSTKRKEAESKGSAKKKAKTGGTPAGKFKRGK.

It belongs to the XPG/RAD2 endonuclease family. FEN1 subfamily. As to quaternary structure, interacts with PCNA. Three molecules of fen1 bind to one PCNA trimer with each molecule binding to one PCNA monomer. PCNA stimulates the nuclease activity without altering cleavage specificity. It depends on Mg(2+) as a cofactor. Post-translationally, phosphorylated. Phosphorylation upon DNA damage induces relocalization to the nuclear plasma.

It is found in the nucleus. The protein localises to the nucleolus. It localises to the nucleoplasm. Its subcellular location is the mitochondrion. Functionally, structure-specific nuclease with 5'-flap endonuclease and 5'-3' exonuclease activities involved in DNA replication and repair. During DNA replication, cleaves the 5'-overhanging flap structure that is generated by displacement synthesis when DNA polymerase encounters the 5'-end of a downstream Okazaki fragment. It enters the flap from the 5'-end and then tracks to cleave the flap base, leaving a nick for ligation. Also involved in the long patch base excision repair (LP-BER) pathway, by cleaving within the apurinic/apyrimidinic (AP) site-terminated flap. Acts as a genome stabilization factor that prevents flaps from equilibrating into structures that lead to duplications and deletions. Also possesses 5'-3' exonuclease activity on nicked or gapped double-stranded DNA, and exhibits RNase H activity. Also involved in replication and repair of rDNA and in repairing mitochondrial DNA. The sequence is that of Flap endonuclease 1-A (fen1-a) from Xenopus laevis (African clawed frog).